The sequence spans 729 residues: Probable ATP-dependent RNA helicase DDX17 (729 aa).

Residues 20-115 are disordered; the sequence is EAATVASATG…PPKKFGNPGE (96 aa). Ser64 carries the post-translational modification Phosphoserine. The span at 86-95 shows a compositional bias: basic and acidic residues; the sequence is GDRDRDRDRG. Over residues 96–105 the composition is skewed to gly residues; sequence GFGARGGGGL. N6-acetyllysine; by EP300 occurs at positions 108, 109, and 121. Lys129 participates in a covalent cross-link: Glycyl lysine isopeptide (Lys-Gly) (interchain with G-Cter in SUMO); alternate. Residue Lys129 forms a Glycyl lysine isopeptide (Lys-Gly) (interchain with G-Cter in SUMO1); alternate linkage. Residue Lys129 forms a Glycyl lysine isopeptide (Lys-Gly) (interchain with G-Cter in SUMO2); alternate linkage. The Q motif motif lies at 171–199; it reads FAFHHANFPQYVMDVLMDQHFTEPTPIQC. Positions 202–377 constitute a Helicase ATP-binding domain; that stretch reads FPLALSGRDM…EDFLRDYTQI (176 aa). 215 to 222 contributes to the ATP binding site; it reads AQTGSGKT. Positions 325-328 match the DEAD box motif; that stretch reads DEAD. The Helicase C-terminal domain occupies 405–552; the sequence is KLIQLMEEIM…AINPKLMQLV (148 aa). The residue at position 523 (Thr523) is a Phosphothreonine. A Glycyl lysine isopeptide (Lys-Gly) (interchain with G-Cter in SUMO2) cross-link involves residue Lys528. Positions 547–729 are transactivation domain; that stretch reads KLMQLVDHRG…PPPPPPPSRK (183 aa). Disordered stretches follow at residues 551 to 623 and 659 to 729; these read LVDH…GSPN and TYGA…PSRK. Polar residues predominate over residues 568–578; sequence RTTSSANNPNL. Over residues 583–610 the composition is skewed to basic and acidic residues; the sequence is ECDRRLRGVKDGGRRDSASYRDRSETDR. Low complexity predominate over residues 659 to 688; sequence TYGASSTTSTGRSSQSSSQQFSGIGRSGQQ. Arg684 bears the Omega-N-methylarginine mark. A compositionally biased stretch (polar residues) spans 689-698; the sequence is PQPLMSQQFA. Positions 717–729 are enriched in pro residues; the sequence is YPPPPPPPPPSRK. The segment at 718–726 is interaction with YAP1; sequence PPPPPPPPP.

Belongs to the DEAD box helicase family. DDX5/DBP2 subfamily. As to quaternary structure, interacts with DDX5 in an RNA-independent manner. Interacts with CDK9 transcription elongation complex under basal conditions. Following cell stimulation with poly(I:C), a synthetic double-stranded RNA mimicking viral infection, the interaction with CDK9 is decreased. Interacts with ESR1 in an estrogen-independent manner. Interacts with HNRNPH1; this interaction is important for the regulation of alternative splicing on G-quadruplex structures. At high, but not low, cell density, interacts with DROSHA and DGCR8, the core components of the microprocessor complex involved in the maturation of primary microRNAs (pri-miRNAs) into pre-miRNAs. The interaction with DGCR8 is reduced during mitosis. At low, but not high, cell density, interacts with YAP1 and with its paralog, WWTR1/TAZ. Interactions with DROSHA and YAP1 are mutually exclusive. In vitro, the pre-miRNA processing activity of the DDX17-containing microprocessor complex is weaker than that of the DROSHA/DGCR8 microprocessor complex devoid of DDX17. Interacts with UPF3B. Interacts with NFAT5; this interaction leads to DDX17 recruitment to LNC2 and S100A4 promoters and NFAT5-mediated DDX17-enhanced transactivation. Interacts with HDAC1, HDAC2 and HDAC3; this interaction with HDAC1 and HDAC3, but not HDAC2, depends upon DDX17 acetylation. Interacts with ZC3HAV1 (via N-terminal domain) in an RNA-independent manner. Interacts with EXOSC3/RRP40 and EXOSC5/RRP46; this interaction may be indirect and mediated by ZC3HAV1-binding. Interacts with EP300; this interaction leads to acetylation at lysine residues. Interacts with CREBBP/CBP and KAT2B/P/CAF. Directly interacts with CTNNB1. Interacts with MYOD1. Interacts with TP53. Interacts with DCP1A in an RNA-independent manner. Interacts with DCP2 in an RNA-dependent manner. Interacts with DHX36; this interaction occurs in a RNA-dependent manner. Interacts with ERCC6. In terms of processing, sumoylation significantly increases stability. It also promotes interaction specifically with HDAC1 (but not HDAC2, nor HDAC3) and strongly stimulates ESR1 and TP53 coactivation. Acetylation at lysine residues stabilizes the protein, stimulates interaction with HDAC1 and HDAC3, but not HDAC2, and represses ESR1 and TP53 coactivation activity. In terms of tissue distribution, widely expressed. Low expression, if any, in normal colonic epithelial cells (at protein level). Levels tend to increase during colon cancer progression, from very low in benign hyperplastic polyps to very high in tubular and villous adenomas.

It is found in the nucleus. The protein resides in the nucleolus. Its subcellular location is the cytoplasm. The protein localises to the cytosol. The enzyme catalyses ATP + H2O = ADP + phosphate + H(+). Functionally, as an RNA helicase, unwinds RNA and alters RNA structures through ATP binding and hydrolysis. Involved in multiple cellular processes, including pre-mRNA splicing, alternative splicing, ribosomal RNA processing and miRNA processing, as well as transcription regulation. Regulates the alternative splicing of exons exhibiting specific features. For instance, promotes the inclusion of AC-rich alternative exons in CD44 transcripts. This function requires the RNA helicase activity. Affects NFAT5 and histone macro-H2A.1/MACROH2A1 alternative splicing in a CDK9-dependent manner. In NFAT5, promotes the introduction of alternative exon 4, which contains 2 stop codons and may target NFAT5 exon 4-containing transcripts to nonsense-mediated mRNA decay, leading to the down-regulation of NFAT5 protein. Affects splicing of mediators of steroid hormone signaling pathway, including kinases that phosphorylates ESR1, such as CDK2, MAPK1 and GSK3B, and transcriptional regulators, such as CREBBP, MED1, NCOR1 and NCOR2. By affecting GSK3B splicing, participates in ESR1 and AR stabilization. In myoblasts and epithelial cells, cooperates with HNRNPH1 to control the splicing of specific subsets of exons. In addition to binding mature mRNAs, also interacts with certain pri-microRNAs, including MIR663/miR-663a, MIR99B/miR-99b, and MIR6087/miR-6087. Binds pri-microRNAs on the 3' segment flanking the stem loop via the 5'-[ACG]CAUC[ACU]-3' consensus sequence. Required for the production of subsets of microRNAs, including MIR21 and MIR125B1. May be involved not only in microRNA primary transcript processing, but also stabilization. Participates in MYC down-regulation at high cell density through the production of MYC-targeting microRNAs. Along with DDX5, may be involved in the processing of the 32S intermediate into the mature 28S ribosomal RNA. Promoter-specific transcription regulator, functioning as a coactivator or corepressor depending on the context of the promoter and the transcriptional complex in which it exists. Enhances NFAT5 transcriptional activity. Synergizes with TP53 in the activation of the MDM2 promoter; this activity requires acetylation on lysine residues. May also coactivate MDM2 transcription through a TP53-independent pathway. Coactivates MMP7 transcription. Along with CTNNB1, coactivates MYC, JUN, FOSL1 and cyclin D1/CCND1 transcription. Alone or in combination with DDX5 and/or SRA1 non-coding RNA, plays a critical role in promoting the assembly of proteins required for the formation of the transcription initiation complex and chromatin remodeling leading to coactivation of MYOD1-dependent transcription. This helicase-independent activity is required for skeletal muscle cells to properly differentiate into myotubes. During epithelial-to-mesenchymal transition, coregulates SMAD-dependent transcriptional activity, directly controlling key effectors of differentiation, including miRNAs which in turn directly repress its expression. Plays a role in estrogen and testosterone signaling pathway at several levels. Mediates the use of alternative promoters in estrogen-responsive genes and regulates transcription and splicing of a large number of steroid hormone target genes. Contrary to splicing regulation activity, transcriptional coregulation of the estrogen receptor ESR1 is helicase-independent. Plays a role in innate immunity. Specifically restricts bunyavirus infection, including Rift Valley fever virus (RVFV) or La Crosse virus (LACV), but not vesicular stomatitis virus (VSV), in an interferon- and DROSHA-independent manner. Binds to RVFV RNA, likely via structured viral RNA elements. Promotes mRNA degradation mediated by the antiviral zinc-finger protein ZC3HAV1, in an ATPase-dependent manner. The chain is Probable ATP-dependent RNA helicase DDX17 (DDX17) from Homo sapiens (Human).